The sequence spans 542 residues: Chaperonin GroEL (542 aa).

Residues 29 to 32, 86 to 90, Gly413, 478 to 480, and Asp494 each bind ATP; these read TLGP, DGTTT, and DAL.

This sequence belongs to the chaperonin (HSP60) family. As to quaternary structure, forms a cylinder of 14 subunits composed of two heptameric rings stacked back-to-back. Interacts with the co-chaperonin GroES.

The protein localises to the cytoplasm. It carries out the reaction ATP + H2O + a folded polypeptide = ADP + phosphate + an unfolded polypeptide.. Together with its co-chaperonin GroES, plays an essential role in assisting protein folding. The GroEL-GroES system forms a nano-cage that allows encapsulation of the non-native substrate proteins and provides a physical environment optimized to promote and accelerate protein folding. The protein is Chaperonin GroEL of Clostridioides difficile (strain 630) (Peptoclostridium difficile).